The following is a 400-amino-acid chain: Putative lysosomal acid lipase/cholesteryl ester hydrolase (400 aa).

Residues Met-1–Ser-17 form the signal peptide. N-linked (GlcNAc...) asparagine glycans are attached at residues Asn-34, Asn-129, and Asn-159. In terms of domain architecture, AB hydrolase-1 spans Pro-78–Gly-378. Catalysis depends on Ser-172, which acts as the Charge relay system. Asn-271 is a glycosylation site (N-linked (GlcNAc...) asparagine). The active-site Charge relay system is His-372.

It belongs to the AB hydrolase superfamily. Lipase family. Expressed by the venom gland.

It is found in the secreted. The catalysed reaction is a sterol ester + H2O = a sterol + a fatty acid + H(+). In terms of biological role, in physiological conditions, is crucial for intracellular hydrolysis of cholesteryl esters and triglycerides that have been internalized via receptor-mediated endocytosis of lipoprotein particles. In venom, the biological contribution is unknown. In Crotalus adamanteus (Eastern diamondback rattlesnake), this protein is Putative lysosomal acid lipase/cholesteryl ester hydrolase.